The primary structure comprises 710 residues: Protein CNGC15a (710 aa).

The next 6 helical transmembrane spans lie at 85–105 (IFLAACLISLFVDPLFFYLPV), 115–135 (SIGLEVSLTIIRTFVDAFYII), 174–194 (LWSDLVAALPLPQVLIWAVIP), 207–226 (VVRLVSIFQYLLRLYLIYPL), 248–268 (YLTLYMLASHVLGSTWYLLSI), and 368–388 (AEINFAVIVAILGLVLFALLI). 474–559 (LFDQMDDRML…WALDPRPTAV (86 aa)) provides a ligand contact to a nucleoside 3',5'-cyclic phosphate.

It belongs to the cyclic nucleotide-gated cation channel (TC 1.A.1.5) family. As to quaternary structure, interacts (via N-terminus) with DMI1 (via c-terminus). The Nod factor has no effect on this interaction, implying that the complex is maintained after activation. In terms of tissue distribution, expressed in roots, stems, leaves, flowers and pods.

The protein localises to the nucleus membrane. Functionally, cyclic nucleotide-gated channel involved in the establishment of both rhizobial and mycorrhizal associations. Required for full activation of nuclear-localized Ca(2+) oscillations by Nod and Myc factors. Simultaneous activation of the K(+)-permeable channel DMI1 and the Ca(2+) channel CNGC15 can give rise to sustained Ca(2+) oscillations. May function during fertilization in both female and male gametophytic Ca(2+) signaling. The protein is Protein CNGC15a of Medicago truncatula (Barrel medic).